The chain runs to 1887 residues: Bifunctional serine/threonine-protein kinase/NEDD4-like E3 ubiquitin-protein ligase (1887 aa).

Disordered regions lie at residues 19–55 (TPQVNLFNNSNNGGNNSNNGGNNSTPTLTKTPSTTNF) and 72–98 (TDNYNFNNNNNNNNNNNNNNNNNTKEN). Low complexity-rich tracts occupy residues 26–54 (NNSNNGGNNSNNGGNNSTPTLTKTPSTTN) and 72–97 (TDNYNFNNNNNNNNNNNNNNNNNTKE). RCC1 repeat units follow at residues 206–260 (QGNL…ALTI), 262–314 (GKVY…NNNN), 356–409 (KGLL…VLTN), 411–470 (GLVF…AISD), 472–528 (NDTY…AMSI), and 529–581 (DGSL…IVEK). The segment at 299–333 (NNNNNNNNNNSTNNNNNNNNDGAQQQFSLSQNSSS) is disordered. Disordered stretches follow at residues 594–619 (LPSSTQSQQQTELSLPSSVNSSSDSN), 823–858 (VLVHQDEKQQQREKSETELEEEQDEEEEDSEIKNGT), and 1030–1088 (DDDN…NNNN). Over residues 825–839 (VHQDEKQQQREKSET) the composition is skewed to basic and acidic residues. Residues 840–852 (ELEEEQDEEEEDS) are compositionally biased toward acidic residues. Residues 1036–1088 (ENNSVNNNSNNNNNNNNNNNNNNNNNNNNNNNIDNNINSNSINDSSNNNNNNN) are compositionally biased toward low complexity. Residues 1158–1437 (YDIIKTLSTH…AHQIAVHPYF (280 aa)) form the Protein kinase domain. Residues 1164-1172 (LSTHPHNVY) and lysine 1184 each bind ATP. Aspartate 1281 (proton acceptor) is an active-site residue. Residues 1501-1887 (ESNKLFCRLE…LEYVDGFAFI (387 aa)) enclose the HECT domain. The disordered stretch occupies residues 1586–1628 (NNNNNNEENNNNNNNNNNNNNNNNNNNNNNNNNNNNNNNNNEE). The active-site Glycyl thioester intermediate is cysteine 1855.

In the N-terminal section; belongs to the protein kinase superfamily. Ser/Thr protein kinase family. This sequence in the C-terminal section; belongs to the protein kinase superfamily. CAMK Ser/Thr protein kinase family.

The enzyme catalyses L-seryl-[protein] + ATP = O-phospho-L-seryl-[protein] + ADP + H(+). It carries out the reaction L-threonyl-[protein] + ATP = O-phospho-L-threonyl-[protein] + ADP + H(+). The catalysed reaction is S-ubiquitinyl-[E2 ubiquitin-conjugating enzyme]-L-cysteine + [acceptor protein]-L-lysine = [E2 ubiquitin-conjugating enzyme]-L-cysteine + N(6)-ubiquitinyl-[acceptor protein]-L-lysine.. The protein operates within protein modification; protein ubiquitination. In Dictyostelium discoideum (Social amoeba), this protein is Bifunctional serine/threonine-protein kinase/NEDD4-like E3 ubiquitin-protein ligase.